Reading from the N-terminus, the 355-residue chain is Protein-tyrosine sulfotransferase 1 (355 aa).

Residues 1–8 (MIGKLKQN) lie on the Cytoplasmic side of the membrane. A helical; Signal-anchor for type II membrane protein membrane pass occupies residues 9–25 (LLVACLVISSVTVFYLC). Over 26–355 (RHAMDCHHRI…QKSPEKPNPS (330 aa)) the chain is Lumenal. The N-linked (GlcNAc...) asparagine glycan is linked to asparagine 55. Position 76–80 (76–80 (RSGTT)) interacts with 3'-phosphoadenylyl sulfate. An intrachain disulfide couples cysteine 94 to cysteine 154. The active-site Proton donor/acceptor is glutamate 97. The interval 99-103 (RVIPR) is interaction with peptide substrate. Arginine 181, serine 189, and arginine 193 together coordinate 3'-phosphoadenylyl sulfate. Cysteine 223 and cysteine 230 form a disulfide bridge. 3'-phosphoadenylyl sulfate-binding positions include tyrosine 235, 282 to 291 (STDQVIKPVN), and lysine 297. Residues 325-355 (HANPPNYGRPDPLVLDNTRRLQKSPEKPNPS) are disordered. A compositionally biased stretch (basic and acidic residues) spans 341–355 (NTRRLQKSPEKPNPS).

Belongs to the protein sulfotransferase family.

It is found in the golgi apparatus membrane. It carries out the reaction L-tyrosyl-[protein] + 3'-phosphoadenylyl sulfate = O-sulfo-L-tyrosine-[protein] + adenosine 3',5'-bisphosphate + H(+). Catalyzes the O-sulfation of tyrosine residues within acidic motifs of polypeptides, using 3'-phosphoadenylyl sulfate (PAPS) as cosubstrate. The polypeptide is Protein-tyrosine sulfotransferase 1 (tpst1) (Danio rerio (Zebrafish)).